We begin with the raw amino-acid sequence, 691 residues long: Solute carrier family 28 member 3 (691 aa).

The interval Met1 to Gln78 is disordered. The Cytoplasmic portion of the chain corresponds to Met1–Arg102. Residues Asn21 to Asn30 are compositionally biased toward low complexity. A compositionally biased stretch (polar residues) spans Thr31–Val42. Positions Gln43–Glu54 are enriched in basic and acidic residues. A helical transmembrane segment spans residues His103–Leu123. Topologically, residues Asn124–Ala128 are extracellular. Residues Leu129 to Ala149 traverse the membrane as a helical segment. Topologically, residues Lys150–Leu173 are cytoplasmic. A helical transmembrane segment spans residues Lys174–Ala194. At Lys195 to Gly197 the chain is on the extracellular side. A helical transmembrane segment spans residues Gln198 to Lys219. Residues Tyr220–Arg227 are Cytoplasmic-facing. A helical transmembrane segment spans residues Pro228 to Asp247. Residues Pro248–Phe284 are Extracellular-facing. A helical membrane pass occupies residues Ala285–Leu305. Residues Gly306 to Glu329 lie on the Cytoplasmic side of the membrane. Positions Ser330 to Val348 form an intramembrane region, helical. Residues Arg349–His361 lie on the Cytoplasmic side of the membrane. A helical membrane pass occupies residues Ala362 to Val384. Residues Pro385 to Ser386 lie on the Extracellular side of the membrane. A helical transmembrane segment spans residues Ser387–Trp408. The Cytoplasmic portion of the chain corresponds to Pro409–Ser443. The chain crosses the membrane as a helical span at residues Ile444–Ser469. Residues Trp470–Val507 are Extracellular-facing. Residues Ala508–Ser527 constitute an intramembrane region (helical). The Extracellular segment spans residues Lys528–Ile566. The helical transmembrane segment at Gly567–Thr577 threads the bilayer. The Cytoplasmic portion of the chain corresponds to Ser578–Gly590. A helical membrane pass occupies residues Ala591–Ser613. Over Ser614–Phe691 the chain is Extracellular.

Belongs to the concentrative nucleoside transporter (CNT) (TC 2.A.41) family. As to quaternary structure, homotrimer. Expressed in pancreas, bone marrow, trachea, mammary gland, liver, prostate, and regions of intestine, brain, lung, placenta, testis, kidney, and heart.

The protein resides in the cell membrane. The protein localises to the endoplasmic reticulum membrane. It catalyses the reaction thymidine(out) + 2 Na(+)(out) = thymidine(in) + 2 Na(+)(in). The catalysed reaction is cytidine(out) + 2 Na(+)(out) = cytidine(in) + 2 Na(+)(in). It carries out the reaction uridine(out) + 2 Na(+)(out) = uridine(in) + 2 Na(+)(in). The enzyme catalyses adenosine(out) + 2 Na(+)(out) = adenosine(in) + 2 Na(+)(in). It catalyses the reaction guanosine(out) + 2 Na(+)(out) = guanosine(in) + 2 Na(+)(in). The catalysed reaction is inosine(out) + 2 Na(+)(out) = inosine(in) + 2 Na(+)(in). In terms of biological role, sodium-dependent, pyrimidine- and purine-selective. Involved in the homeostasis of endogenous nucleosides. Exhibits the transport characteristics of the nucleoside transport system cib or N3 subtype (N3/cib) (with marked transport of both thymidine and inosine). Employs a 2:1 sodium/nucleoside ratio. Transports uridine. Also able to transport gemcitabine, 3'-azido-3'-deoxythymidine (AZT), ribavirin and 3-deazauridine. In Homo sapiens (Human), this protein is Solute carrier family 28 member 3 (SLC28A3).